The chain runs to 85 residues: Alpha-defensin 11 (85 aa).

The N-terminal stretch at 1 to 11 (ALVLLAFQVQA) is a signal peptide. A propeptide spanning residues 12-50 (DPIQNTDEETKTEEQPGEEDQAVSVSFGDPEGTSLQEES) is cleaved from the precursor. A disordered region spans residues 14–46 (IQNTDEETKTEEQPGEEDQAVSVSFGDPEGTSL). 3 disulfide bridges follow: Cys56/Cys84, Cys58/Cys73, and Cys63/Cys83.

The protein belongs to the alpha-defensin family. In terms of tissue distribution, paneth cells of the small bowel.

It is found in the secreted. Its function is as follows. Probably contributes to the antimicrobial barrier function of the small bowel mucosa. The chain is Alpha-defensin 11 (Defa11) from Mus musculus (Mouse).